The sequence spans 199 residues: MTRLVVATRNKGKLREIAAILDGLPFTLLSLEDFPDFPEVEEDGKTFEENALKKASVAANITGLPALADDSGLVVDALDGKPGVYSARYSGENASDEANNAKLLSELESVPYEERTAAFRCTIALCSPGGKRYTFSGELHGVILDSPRGTGGFGYDPLFFVSEKGATMAELPLEAKNAVSHRGRALALLKDHLGWQGIE.

8 to 13 contributes to the substrate binding site; that stretch reads TRNKGK. Residues glutamate 41 and aspartate 70 each contribute to the Mg(2+) site. The active-site Proton acceptor is aspartate 70. Substrate-binding positions include serine 71, 153-156, lysine 176, and 181-182; these read FGYD and HR.

It belongs to the HAM1 NTPase family. Homodimer. It depends on Mg(2+) as a cofactor.

The enzyme catalyses XTP + H2O = XMP + diphosphate + H(+). It catalyses the reaction dITP + H2O = dIMP + diphosphate + H(+). The catalysed reaction is ITP + H2O = IMP + diphosphate + H(+). In terms of biological role, pyrophosphatase that catalyzes the hydrolysis of nucleoside triphosphates to their monophosphate derivatives, with a high preference for the non-canonical purine nucleotides XTP (xanthosine triphosphate), dITP (deoxyinosine triphosphate) and ITP. Seems to function as a house-cleaning enzyme that removes non-canonical purine nucleotides from the nucleotide pool, thus preventing their incorporation into DNA/RNA and avoiding chromosomal lesions. This is dITP/XTP pyrophosphatase from Geobacter sulfurreducens (strain ATCC 51573 / DSM 12127 / PCA).